The chain runs to 355 residues: Chemerin-like receptor 2 (355 aa).

At 1–41 (MEDLEETLFEEFENYSYALDYYSLESDLEEKVQLGVVHWVS) the chain is on the extracellular side. Residue Asn14 is glycosylated (N-linked (GlcNAc...) asparagine). A helical transmembrane segment spans residues 42–62 (LVLYCLSFVLGIPGNAIVIWF). Residues 63-73 (TGFKWKRTVST) lie on the Cytoplasmic side of the membrane. The chain crosses the membrane as a helical span at residues 74 to 94 (LWFLNLAIADFIFLLFLPLYI). The Extracellular portion of the chain corresponds to 95 to 112 (SYVVMNFHWPFGIWLCKA). A disulfide bridge connects residues Cys110 and Cys187. Residues 113–133 (NSFTAQLNMFASVFFLTVISL) traverse the membrane as a helical segment. The Cytoplasmic portion of the chain corresponds to 134–154 (DHYIHLIHPVLSHRHRTLKNS). The chain crosses the membrane as a helical span at residues 155–175 (LIVIIFIWLLASLIGGPALYF). Residues 176-210 (RDTVEFNNHTLCYNNFQKHDPDLTVIRHHVLTWVK) are Extracellular-facing. Residues 211–231 (YIVGYLFPLLTMSICYLCLIL) traverse the membrane as a helical segment. Residues 232-247 (KVKKRSILISSRHFWT) lie on the Cytoplasmic side of the membrane. The chain crosses the membrane as a helical span at residues 248–268 (ILAVVVAFVVCWTPYHLFSIW). The Extracellular portion of the chain corresponds to 269–286 (ELTIHHNSYSHHVMQAGI). The chain crosses the membrane as a helical span at residues 287 to 307 (PLSTGLAFLNSCLNPILYVLI). The Cytoplasmic portion of the chain corresponds to 308–355 (SKKFQARFRSSVAEILKYTLWEVSCSGTVSEQLRNSETKNLCLLETAQ).

Belongs to the chemokine-like receptor (CMKLR) family.

The protein localises to the cell membrane. In terms of biological role, receptor for chemoattractant adipokine chemerin/RARRES2 suggesting a role for this receptor in the regulation of inflammation and energy homesotasis. Signals mainly via beta-arrestin pathway. Binding of RARRES2 activates weakly G proteins, calcium mobilization and MAPK1/MAPK3 (ERK1/2) phosphorylation too. Acts also as a receptor for TAFA1, mediates its effects on neuronal stem-cell proliferation and differentiation via the activation of ROCK/ERK and ROCK/STAT3 signaling pathway. The protein is Chemerin-like receptor 2 (CMKLR2) of Macaca fascicularis (Crab-eating macaque).